We begin with the raw amino-acid sequence, 420 residues long: Adenylosuccinate synthetase (420 aa).

GTP is bound by residues Gly-12–Lys-18 and Gly-40–Thr-42. The active-site Proton acceptor is the Asp-13. Mg(2+)-binding residues include Asp-13 and Gly-40. Residues Asp-13–Lys-16, Asn-38–His-41, Thr-128, Arg-142, Gln-221, Thr-236, and Arg-299 each bind IMP. Residue His-41 is the Proton donor of the active site. Ala-295–Arg-301 provides a ligand contact to substrate. GTP contacts are provided by residues Arg-301, Lys-327–Asp-329, and Ser-399–Gly-401.

The protein belongs to the adenylosuccinate synthetase family. As to quaternary structure, homodimer. Mg(2+) serves as cofactor.

The protein resides in the cytoplasm. It carries out the reaction IMP + L-aspartate + GTP = N(6)-(1,2-dicarboxyethyl)-AMP + GDP + phosphate + 2 H(+). It participates in purine metabolism; AMP biosynthesis via de novo pathway; AMP from IMP: step 1/2. In terms of biological role, plays an important role in the de novo pathway of purine nucleotide biosynthesis. Catalyzes the first committed step in the biosynthesis of AMP from IMP. This is Adenylosuccinate synthetase from Petrotoga mobilis (strain DSM 10674 / SJ95).